A 442-amino-acid polypeptide reads, in one-letter code: Type 3 secretion system ATPase (442 aa).

173-178 (GVGKST) is a binding site for ATP.

This sequence belongs to the ATPase alpha/beta chains family. T3SS ATPase subfamily. The core secretion machinery of the T3SS is composed of approximately 20 different proteins, including cytoplasmic components, a base, an export apparatus and a needle. This subunit is part of the cytosolic complex. Forms homohexamers.

It is found in the cytoplasm. It carries out the reaction ATP + H2O + cellular proteinSide 1 = ADP + phosphate + cellular proteinSide 2.. ATPase component of the type III secretion system (T3SS), also called injectisome, which is used to inject bacterial effector proteins into eukaryotic host cells. Acts as a molecular motor to provide the energy that is required for the export of proteins. Required for type III secretion apparatus (T3SA) formation, proper protein secretion, host cell invasion and virulence. May play a critical role in T3SS substrate recognition, disassembly of the effector/chaperone complex and unfolding of the effector in an ATP-dependent manner prior to secretion. The chain is Type 3 secretion system ATPase from Xanthomonas euvesicatoria.